Reading from the N-terminus, the 571-residue chain is Endonuclease/exonuclease/phosphatase family domain-containing protein 1 (571 aa).

The disordered stretch occupies residues 1–20; the sequence is MGSTLGCHRSIPRDPSDLSH. Glycine 2 carries the N-myristoyl glycine lipid modification. Positions 11-20 are enriched in basic and acidic residues; that stretch reads IPRDPSDLSH. Residues serine 16, serine 21, and serine 25 each carry the phosphoserine modification. One can recognise a HhH domain in the interval 38–67; it reads ERLNINTATEEELMTLPGVTRAVARSIVEY. Phosphoserine is present on residues serine 106, serine 110, serine 162, and serine 175. Residues 202 to 227 are disordered; it reads SRPPSTHTNGGLTFTAKPHPSPTSLS. The segment covering 204-213 has biased composition (polar residues); sequence PPSTHTNGGL. Phosphothreonine is present on threonine 267. At serine 430 the chain carries Phosphoserine. A disordered region spans residues 548-571; it reads RKEGPRSGNGLTLERSEANIKHER. Basic and acidic residues predominate over residues 561–571; that stretch reads ERSEANIKHER.

In Bos taurus (Bovine), this protein is Endonuclease/exonuclease/phosphatase family domain-containing protein 1 (EEPD1).